Reading from the N-terminus, the 439-residue chain is tRNA(Ile)-lysidine synthase (439 aa).

25 to 30 (SGGLDS) provides a ligand contact to ATP.

The protein belongs to the tRNA(Ile)-lysidine synthase family.

It localises to the cytoplasm. It catalyses the reaction cytidine(34) in tRNA(Ile2) + L-lysine + ATP = lysidine(34) in tRNA(Ile2) + AMP + diphosphate + H(+). In terms of biological role, ligates lysine onto the cytidine present at position 34 of the AUA codon-specific tRNA(Ile) that contains the anticodon CAU, in an ATP-dependent manner. Cytidine is converted to lysidine, thus changing the amino acid specificity of the tRNA from methionine to isoleucine. In Edwardsiella ictaluri (strain 93-146), this protein is tRNA(Ile)-lysidine synthase.